Reading from the N-terminus, the 85-residue chain is Mitochondrial protein pet191 homolog (85 aa).

The CHCH domain maps to H18–T61. The short motif at C21–C32 is the Cx10C motif element. Cystine bridges form between C21–C53 and C32–C43. Positions C43–C53 match the Cx9C motif motif. The segment at R65–Q85 is disordered.

This sequence belongs to the PET191 family.

Its subcellular location is the mitochondrion. In terms of biological role, involved in the assembly of cytochrome c oxidase. This is Mitochondrial protein pet191 homolog from Schizosaccharomyces pombe (strain 972 / ATCC 24843) (Fission yeast).